Here is a 388-residue protein sequence, read N- to C-terminus: Leucine aminopeptidase 1 (388 aa).

Residues 1 to 19 (MKSLSLLALAAIAPPAAVA) form the signal peptide. Positions 20-88 (AVVDRQVPFE…SAKSHERIQV (69 aa)) are excised as a propeptide. N-linked (GlcNAc...) asparagine glycosylation occurs at asparagine 180. The Zn(2+) site is built by histidine 188, aspartate 207, glutamate 246, and aspartate 273. Residues cysteine 322 and cysteine 326 are joined by a disulfide bond. Position 355 (histidine 355) interacts with Zn(2+).

The protein belongs to the peptidase M28 family. M28E subfamily. As to quaternary structure, monomer. Zn(2+) serves as cofactor.

It is found in the secreted. Functionally, extracellular aminopeptidase that allows assimilation of proteinaceous substrates. This chain is Leucine aminopeptidase 1 (LAP1), found in Coccidioides posadasii (strain C735) (Valley fever fungus).